The sequence spans 506 residues: Glutamate--tRNA ligase (506 aa).

Residues 9–19 (PSPTGFQHIGG) carry the 'HIGH' region motif. The short motif at 251–255 (KLSKR) is the 'KMSKS' region element. An ATP-binding site is contributed by lysine 254.

The protein belongs to the class-I aminoacyl-tRNA synthetase family. Glutamate--tRNA ligase type 1 subfamily. Monomer.

It localises to the cytoplasm. It catalyses the reaction tRNA(Glu) + L-glutamate + ATP = L-glutamyl-tRNA(Glu) + AMP + diphosphate. Catalyzes the attachment of glutamate to tRNA(Glu) in a two-step reaction: glutamate is first activated by ATP to form Glu-AMP and then transferred to the acceptor end of tRNA(Glu). The sequence is that of Glutamate--tRNA ligase from Treponema denticola (strain ATCC 35405 / DSM 14222 / CIP 103919 / JCM 8153 / KCTC 15104).